The primary structure comprises 1418 residues: MRPFLDDAKRRVDRKLSASRQSLSTSRLLPSALPDRLKDNHDAQVDFTAPPGGSGSREGHLQYMQQSIFGMIAAVGSRSDFHARFDESSDSDGESEQRPRKESSVRKGTSASANTSSPLDSSQRSSSRTDGKSEKESGTRGRRHPRTISDHKLFRPFESNSKHEPQTDPSTGDEMPNISPPTRPRSATPRAAPILSRMVEAQAQFDLKASSTERSQPSLDESGEKGPRGASVSPLSTRLMDMFGFDKPEKVLVEYACSLLQSILLQGYMYVTEGHICFYAYLPKKSTVAIKSGYLYKRGRKNPKYSRYWFSLKGDVLSYYADPSNLYFPSGHVDLRYGISASLGEAKEKGREPRDFQVTTDQRTYYFRADSSMSAKEWVKALQKVIFRTHNEGESVKISFPIESIIDIEESPMVDFAETFKIRVIEDDDSYAIDEYFFTFFNSGREAFEFLRSLINDQSLKISSQHLSPQPDRSPRSDPTRKSRNRWSLTSGTSRVLGNSRAETQRKASASTSHTSLAHDVIKSSPATRHQDSSESILNSFEQGTESSAAWQSMTDAAESASQILNRSDVFQSPTIHGLDRRPSGGERRGRRNSDETARSLSTRANVGTGQQIDELGRRMDGDTSGREARDSTGESDQYTQDPTKSFSGAPSLNELVKAGVYPLQRAAGLAEYLRTRSKQMSNLLASESMGYIEKVSGMWTGGRKHYGEAEDVLPDDQDVDPEDKEDGCNYGDRFRAHFALPRTEKLQATYFAYLHRVLPLYGKIYVSQKKLCFRSLIPGTRTKMILPLRDIENVEKEKGFRFGYHGLVIIIRGHEELFFEFRTSDARDDCAVTLHQHLEAVKFMAESGLLAEQEQNDSEAAMTEHRMLQEARYDDYGENDLRPLNESSELHPIFDDPRASIVNFKPAESLRITCLTIGSRGDVQPYIALCKGLLAEGHRPKIATHAEFEPWVRKHGIDFAPVEGDPAELMRICVENGMFTYSFLKEASQKFRGWIDDLLSSAWASCQDSDLLIESPSAMAGIHIAEALRIPYFRAFTMPWSRTRAYPHAFAVPEHRMGGAYNYITYVMFDNVFWKAIAGQVNRWRKNELGLKATTLDKMQPNKVPFLYNYSPSVVPPPLDYPDWIRITGYWFLNEGSDWTPPTALCEFIHRAREDGKKIVYIGFGSIVVSDPSALTKTVIESVRKADVRCILSKGWSDRLGDPASAKPEVPLPPEIHQIQAAPHDWLFSHIDAAVHHGGAGTTGASLRAGVPTIIKPFFGDQFFFGSRVEDLGVGICMKKLNVSVFSRALWEATHSERMIIRAQDLGARIRSEDGVATAIQAIYRDLEYAKTLARQRSIASSTPFSPTPSAKTTAEQDADDDVEDSEEWTFVGDDTDMEMSRRLRDRAISDADMLPDRLLANSVPGDSGPGRKLSGR.

Residues 1–16 show a composition bias toward basic and acidic residues; the sequence is MRPFLDDAKRRVDRKL. Disordered regions lie at residues 1–59, 83–188, and 207–233; these read MRPF…SREG, ARFD…RSAT, and LKAS…ASVS. Positions 18–28 are enriched in polar residues; it reads ASRQSLSTSRL. Composition is skewed to basic and acidic residues over residues 35–44 and 95–105; these read DRLKDNHDAQ and SEQRPRKESSV. Polar residues predominate over residues 106 to 115; that stretch reads RKGTSASANT. Low complexity predominate over residues 116-126; sequence SSPLDSSQRSS. Basic and acidic residues-rich tracts occupy residues 127 to 139 and 147 to 166; these read SRTD…ESGT and TISD…HEPQ. Residues 209–219 show a composition bias toward polar residues; sequence ASSTERSQPSL. Positions 249–288 constitute a GRAM 1 domain; it reads EKVLVEYACSLLQSILLQGYMYVTEGHICFYAYLPKKSTV. The 99-residue stretch at 289–387 folds into the PH domain; that stretch reads AIKSGYLYKR…WVKALQKVIF (99 aa). The segment at 462-651 is disordered; the sequence is ISSQHLSPQP…DPTKSFSGAP (190 aa). The span at 486-497 shows a compositional bias: polar residues; sequence RWSLTSGTSRVL. Residues 508–519 are compositionally biased toward low complexity; the sequence is ASASTSHTSLAH. A compositionally biased stretch (polar residues) spans 534–575; that stretch reads SESILNSFEQGTESSAAWQSMTDAAESASQILNRSDVFQSPT. Over residues 578 to 598 the composition is skewed to basic and acidic residues; that stretch reads GLDRRPSGGERRGRRNSDETA. The segment covering 599–612 has biased composition (polar residues); it reads RSLSTRANVGTGQQ. The span at 615–633 shows a compositional bias: basic and acidic residues; it reads ELGRRMDGDTSGREARDST. The span at 635–651 shows a compositional bias: polar residues; the sequence is ESDQYTQDPTKSFSGAP. In terms of domain architecture, GRAM 2 spans 733-799; it reads DRFRAHFALP…RDIENVEKEK (67 aa). Residues serine 920, arginine 921, aspartate 923, alanine 1223, histidine 1225, histidine 1238, glycine 1242, threonine 1243, aspartate 1262, and glutamine 1263 each contribute to the UDP-alpha-D-glucose site. The interval 1339–1418 is disordered; it reads SIASSTPFSP…SGPGRKLSGR (80 aa). The segment covering 1341–1355 has biased composition (low complexity); it reads ASSTPFSPTPSAKTT. The segment covering 1358 to 1379 has biased composition (acidic residues); that stretch reads QDADDDVEDSEEWTFVGDDTDM. A compositionally biased stretch (basic and acidic residues) spans 1380 to 1391; sequence EMSRRLRDRAIS.

It belongs to the glycosyltransferase 28 family.

The protein localises to the cytoplasm. The protein resides in the preautophagosomal structure membrane. The enzyme catalyses a sterol + UDP-alpha-D-glucose = a sterol 3-beta-D-glucoside + UDP + H(+). It carries out the reaction ergosterol + UDP-alpha-D-glucose = ergosteryl 3-beta-D-glucoside + UDP + H(+). In terms of biological role, sterol glycosyltransferase responsible for the glycosylation of ergosterol to form ergosterol-glucoside. The polypeptide is Sterol 3-beta-glucosyltransferase (Neosartorya fischeri (strain ATCC 1020 / DSM 3700 / CBS 544.65 / FGSC A1164 / JCM 1740 / NRRL 181 / WB 181) (Aspergillus fischerianus)).